The following is a 284-amino-acid chain: Cell division protein FtsQ (284 aa).

Positions 1 to 10 (MAFGKSKNRR) are enriched in basic residues. Positions 1 to 23 (MAFGKSKNRRRQDAAQQKEAVRG) are disordered. Residues 1 to 34 (MAFGKSKNRRRQDAAQQKEAVRGAVRSQGPRALK) are Cytoplasmic-facing. The helical transmembrane segment at 35 to 52 (VLGLTLGTGLLVWGGAAL) threads the bilayer. Over 53–284 (REWTLTSPRF…ASERSGASMR (232 aa)) the chain is Periplasmic. The POTRA domain maps to 62 to 130 (FELEAVSFSG…NRVSVEVTEH (69 aa)).

The protein belongs to the FtsQ/DivIB family. FtsQ subfamily.

Its subcellular location is the cell inner membrane. Its function is as follows. Essential cell division protein. This Myxococcus fulvus (strain ATCC BAA-855 / HW-1) protein is Cell division protein FtsQ.